A 630-amino-acid chain; its full sequence is Polygalacturonase-1 non-catalytic subunit beta (630 aa).

The first 27 residues, Met-1–Gly-27, serve as a signal peptide directing secretion. Residues Gly-28–Leu-108 constitute a propeptide that is removed on maturation. Asn-124, Asn-142, Asn-256, Asn-334, Asn-369, and Asn-387 each carry an N-linked (GlcNAc...) asparagine glycan. The propeptide occupies Glu-398–Asp-630. Residues Phe-415–Ala-629 enclose the BURP domain.

In terms of assembly, interacts with polygalacturonase-2 (isoenzymes PG2A and PG2B) to form heterodimers called polygalacturonase-1 (PG1). As to expression, mostly expressed in fruit pericarp. Also detected at low levels in cell wall of roots, leaves and flowers (at protein level).

The protein resides in the secreted. It localises to the extracellular space. It is found in the apoplast. The protein localises to the cell wall. Functionally, non-catalytic subunit of the polygalacturonase isozyme 1 (PG1). Necessary and sufficient to convert the polygalacturonase from its monomeric form PG2 to its heterodimeric form PG1. Seems to limit the depolymerization and solubilization of cell wall polyuronides mediated by PG2 during ripening, probably by recruiting PG2 to form PG1. The sequence is that of Polygalacturonase-1 non-catalytic subunit beta (GP1) from Solanum lycopersicum (Tomato).